A 363-amino-acid chain; its full sequence is Nucleoporin SEH1 (363 aa).

WD repeat units follow at residues 15–54 (AHRD…NWRR), 60–101 (CHGG…SEKD), 108–149 (QWIR…RIYE), 158–206 (RWNL…VIYE), 223–264 (DLPC…SAIL), and 287–326 (GDHR…QWVK).

Belongs to the WD repeat SEC13 family. In terms of assembly, component of the nuclear pore complex (NPC). Probably part of the GATOR complex.

Its subcellular location is the nucleus. It localises to the nuclear pore complex. The protein localises to the lysosome membrane. It is found in the nucleus envelope. Its function is as follows. Probable component of the nuclear pore complex (NPC) which is involved in the trafficking of macromolecules between the cytoplasm and nucleus. In terms of biological role, as a component of the GATOR complex may function in the amino acid-sensing branch of the TORC1 signaling pathway. The sequence is that of Nucleoporin SEH1 from Caenorhabditis elegans.